The sequence spans 136 residues: Ribonuclease VapC47 (136 aa).

One can recognise a PINc domain in the interval 2–104 (IYMDTSALTK…AIHLAAAAQI (103 aa)). 2 residues coordinate Mg(2+): D5 and D94.

The protein belongs to the PINc/VapC protein family. The cofactor is Mg(2+).

Its function is as follows. Toxic component of a type II toxin-antitoxin (TA) system. An RNase. Its toxic effect on colony formation is neutralized by coexpression with cognate antitoxin VapB47. The protein is Ribonuclease VapC47 of Mycobacterium tuberculosis (strain CDC 1551 / Oshkosh).